The sequence spans 257 residues: 5-oxoprolinase subunit A (257 aa).

Belongs to the LamB/PxpA family. In terms of assembly, forms a complex composed of PxpA, PxpB and PxpC.

The catalysed reaction is 5-oxo-L-proline + ATP + 2 H2O = L-glutamate + ADP + phosphate + H(+). Its function is as follows. Catalyzes the cleavage of 5-oxoproline to form L-glutamate coupled to the hydrolysis of ATP to ADP and inorganic phosphate. The protein is 5-oxoprolinase subunit A of Fusobacterium nucleatum subsp. nucleatum (strain ATCC 25586 / DSM 15643 / BCRC 10681 / CIP 101130 / JCM 8532 / KCTC 2640 / LMG 13131 / VPI 4355).